The sequence spans 189 residues: Adenylate kinase (189 aa).

Position 10–15 (10–15 (GAGKGT)) interacts with ATP. Residues 30-59 (STGDIFRANVSGGTELGKKAQAYMDRGDLV) are NMP. AMP contacts are provided by residues threonine 31, arginine 36, 57 to 59 (DLV), 85 to 88 (GFPR), and glutamine 92. Residues 126 to 136 (ERARIDNRSDD) form an LID region. Position 127 (arginine 127) interacts with ATP. 2 residues coordinate AMP: arginine 133 and arginine 144. Glycine 172 is an ATP binding site.

It belongs to the adenylate kinase family. Monomer.

Its subcellular location is the cytoplasm. The catalysed reaction is AMP + ATP = 2 ADP. The protein operates within purine metabolism; AMP biosynthesis via salvage pathway; AMP from ADP: step 1/1. Catalyzes the reversible transfer of the terminal phosphate group between ATP and AMP. Plays an important role in cellular energy homeostasis and in adenine nucleotide metabolism. The sequence is that of Adenylate kinase from Thermobifida fusca (strain YX).